The primary structure comprises 203 residues: LexA repressor (203 aa).

The H-T-H motif DNA-binding region spans 28 to 47; that stretch reads IREIGDEFGITAKGAYDHLK. Catalysis depends on for autocatalytic cleavage activity residues serine 127 and lysine 164.

It belongs to the peptidase S24 family. In terms of assembly, homodimer.

The catalysed reaction is Hydrolysis of Ala-|-Gly bond in repressor LexA.. Represses a number of genes involved in the response to DNA damage (SOS response), including recA and lexA. In the presence of single-stranded DNA, RecA interacts with LexA causing an autocatalytic cleavage which disrupts the DNA-binding part of LexA, leading to derepression of the SOS regulon and eventually DNA repair. The chain is LexA repressor from Leptospira borgpetersenii serovar Hardjo-bovis (strain JB197).